A 332-amino-acid polypeptide reads, in one-letter code: tRNA (cytosine(38)-C(5))-methyltransferase (332 aa).

Residues 3–332 (HKILELYSGI…ISELLKILFE (330 aa)) enclose the SAM-dependent MTase C5-type domain. Residues 12–14 (IGG), 33–34 (DI), 55–56 (NI), and S75 contribute to the S-adenosyl-L-homocysteine site. Residue C78 is part of the active site. S-adenosyl-L-homocysteine-binding positions include Q79, S97, and 316–317 (NS).

It belongs to the class I-like SAM-binding methyltransferase superfamily. C5-methyltransferase family.

It is found in the cytoplasm. The protein localises to the nucleus. It carries out the reaction cytidine(38) in tRNA + S-adenosyl-L-methionine = 5-methylcytidine(38) in tRNA + S-adenosyl-L-homocysteine + H(+). The enzyme catalyses a 2'-deoxycytidine in DNA + S-adenosyl-L-methionine = a 5-methyl-2'-deoxycytidine in DNA + S-adenosyl-L-homocysteine + H(+). Functionally, specifically methylates cytosine 38 in the anticodon loop of tRNA(Asp). Also has DNA (cytosine-5)-methyltransferase activity. Shows affinity for both tRNA(Asp) and DNA substrates. The polypeptide is tRNA (cytosine(38)-C(5))-methyltransferase (Spodoptera frugiperda (Fall armyworm)).